Reading from the N-terminus, the 348-residue chain is N-acetyl-gamma-glutamyl-phosphate reductase (348 aa).

The active site involves Cys150.

The protein belongs to the NAGSA dehydrogenase family. Type 1 subfamily.

It localises to the cytoplasm. It carries out the reaction N-acetyl-L-glutamate 5-semialdehyde + phosphate + NADP(+) = N-acetyl-L-glutamyl 5-phosphate + NADPH + H(+). It participates in amino-acid biosynthesis; L-arginine biosynthesis; N(2)-acetyl-L-ornithine from L-glutamate: step 3/4. Catalyzes the NADPH-dependent reduction of N-acetyl-5-glutamyl phosphate to yield N-acetyl-L-glutamate 5-semialdehyde. In Symbiobacterium thermophilum (strain DSM 24528 / JCM 14929 / IAM 14863 / T), this protein is N-acetyl-gamma-glutamyl-phosphate reductase.